The following is a 118-amino-acid chain: Small ribosomal subunit protein uS13 (118 aa).

A disordered region spans residues 94–118 (GLPVRGQRTKTNARTRKGPRKPIKK).

It belongs to the universal ribosomal protein uS13 family. In terms of assembly, part of the 30S ribosomal subunit. Forms a loose heterodimer with protein S19. Forms two bridges to the 50S subunit in the 70S ribosome.

In terms of biological role, located at the top of the head of the 30S subunit, it contacts several helices of the 16S rRNA. In the 70S ribosome it contacts the 23S rRNA (bridge B1a) and protein L5 of the 50S subunit (bridge B1b), connecting the 2 subunits; these bridges are implicated in subunit movement. Contacts the tRNAs in the A and P-sites. The chain is Small ribosomal subunit protein uS13 from Erwinia tasmaniensis (strain DSM 17950 / CFBP 7177 / CIP 109463 / NCPPB 4357 / Et1/99).